The chain runs to 487 residues: 26S proteasome non-ATPase regulatory subunit 3 homolog B (487 aa).

The tract at residues 1–21 is disordered; that stretch reads MTQDVEMKDNQTPTQSVVSAP. The segment covering 10-21 has biased composition (polar residues); it reads NQTPTQSVVSAP. The PCI domain maps to 239–420; that stretch reads CRYLFYLGKI…GCMVSKETGD (182 aa). The disordered stretch occupies residues 452–487; the sequence is PPNTHREKESEEKRREMKQQEEELAKYMAEEDDDDF. Positions 455–480 are enriched in basic and acidic residues; that stretch reads THREKESEEKRREMKQQEEELAKYMA.

The protein belongs to the proteasome subunit S3 family. As to quaternary structure, component of the 19S regulatory particle (RP/PA700) lid subcomplex of the 26S proteasome. The 26S proteasome is composed of a core protease (CP), known as the 20S proteasome, capped at one or both ends by the 19S regulatory particle (RP/PA700). The RP/PA700 complex is composed of at least 17 different subunits in two subcomplexes, the base and the lid, which form the portions proximal and distal to the 20S proteolytic core, respectively. Interacts with UCH1 and UCH2. In terms of tissue distribution, preferentially expressed in flowers.

Its function is as follows. Acts as a regulatory subunit of the 26 proteasome which is involved in the ATP-dependent degradation of ubiquitinated proteins. In Arabidopsis thaliana (Mouse-ear cress), this protein is 26S proteasome non-ATPase regulatory subunit 3 homolog B.